The chain runs to 119 residues: Ribonuclease P protein component (119 aa).

This sequence belongs to the RnpA family. In terms of assembly, consists of a catalytic RNA component (M1 or rnpB) and a protein subunit.

It carries out the reaction Endonucleolytic cleavage of RNA, removing 5'-extranucleotides from tRNA precursor.. RNaseP catalyzes the removal of the 5'-leader sequence from pre-tRNA to produce the mature 5'-terminus. It can also cleave other RNA substrates such as 4.5S RNA. The protein component plays an auxiliary but essential role in vivo by binding to the 5'-leader sequence and broadening the substrate specificity of the ribozyme. The polypeptide is Ribonuclease P protein component (Dictyoglomus turgidum (strain DSM 6724 / Z-1310)).